An 85-amino-acid polypeptide reads, in one-letter code: Photosystem I reaction center subunit PsaK (85 aa).

2 helical membrane-spanning segments follow: residues 12–34 (TVTW…IAVG) and 54–76 (GGMG…IGAI).

The protein belongs to the PsaG/PsaK family.

Its subcellular location is the cellular thylakoid membrane. The protein is Photosystem I reaction center subunit PsaK of Parasynechococcus marenigrum (strain WH8102).